We begin with the raw amino-acid sequence, 450 residues long: tRNA-2-methylthio-N(6)-dimethylallyladenosine synthase (450 aa).

Residues Gly14–Lys132 enclose the MTTase N-terminal domain. 6 residues coordinate [4Fe-4S] cluster: Cys23, Cys59, Cys93, Cys169, Cys173, and Cys176. The Radical SAM core domain maps to Arg155–Lys385. The 63-residue stretch at Lys388 to Ile450 folds into the TRAM domain.

Belongs to the methylthiotransferase family. MiaB subfamily. In terms of assembly, monomer. [4Fe-4S] cluster is required as a cofactor.

It is found in the cytoplasm. The catalysed reaction is N(6)-dimethylallyladenosine(37) in tRNA + (sulfur carrier)-SH + AH2 + 2 S-adenosyl-L-methionine = 2-methylsulfanyl-N(6)-dimethylallyladenosine(37) in tRNA + (sulfur carrier)-H + 5'-deoxyadenosine + L-methionine + A + S-adenosyl-L-homocysteine + 2 H(+). Functionally, catalyzes the methylthiolation of N6-(dimethylallyl)adenosine (i(6)A), leading to the formation of 2-methylthio-N6-(dimethylallyl)adenosine (ms(2)i(6)A) at position 37 in tRNAs that read codons beginning with uridine. This chain is tRNA-2-methylthio-N(6)-dimethylallyladenosine synthase, found in Clostridium botulinum (strain Okra / Type B1).